The sequence spans 149 residues: Nucleoside diphosphate kinase (149 aa).

ATP contacts are provided by Lys-9, Phe-57, Arg-85, Thr-91, Arg-102, and Asn-112. Catalysis depends on His-115, which acts as the Pros-phosphohistidine intermediate.

The protein belongs to the NDK family. As to quaternary structure, homotetramer. Mg(2+) serves as cofactor.

It localises to the cytoplasm. It carries out the reaction a 2'-deoxyribonucleoside 5'-diphosphate + ATP = a 2'-deoxyribonucleoside 5'-triphosphate + ADP. It catalyses the reaction a ribonucleoside 5'-diphosphate + ATP = a ribonucleoside 5'-triphosphate + ADP. Its function is as follows. Major role in the synthesis of nucleoside triphosphates other than ATP. The ATP gamma phosphate is transferred to the NDP beta phosphate via a ping-pong mechanism, using a phosphorylated active-site intermediate. This is Nucleoside diphosphate kinase from Heliobacterium modesticaldum (strain ATCC 51547 / Ice1).